Consider the following 365-residue polypeptide: TD and POZ domain-containing protein 1 (365 aa).

Positions 19-149 constitute an MATH domain; that stretch reads KFCYKWTISN…EDQLTICCKV (131 aa). Residues 188-250 enclose the BTB domain; that stretch reads TDCCLLVAGH…EMMGFIYTGK (63 aa).

This sequence belongs to the Tdpoz family.

This is TD and POZ domain-containing protein 1 from Mus musculus (Mouse).